The chain runs to 543 residues: MRGAGQQPIIVLSQGTKRESGHQVQIGNINACKTIADVIRTSLGPRAMLKMLMDPMGGIVMTNDGNAILREITVKHPAAKSMIEIARTQDEETGDGTTSVIILAGEVMAHAQTYLEQKTHPTLIIKAYRQALEDMIQWSENKFSKTVDITDDAEIAKVVKSCLGTKMISKWMDLAVNISIQAVKTIRVEKAGVREIDIKRYCRIEKIPGGRIEDSQVVKGIVVNKDILHAKMRRRIENPRIVLLDCNLEYKKGESQTSLEIMREEDISAILEQEEQAIRKQCDEIIKLKPDLVFTEKGISDLAQHFLLKAGITCLRRLKKTDNNRLARVCGARVVHDTSDLRDEDVGTKAQLFEVVKIADEYYTYVTAETTTACTVVLRGPSKDVINEVERNLQDSLHVVRNIMINPKLVPGGGALEMALSREIEQQGAKMDGVKKWPYKAIGLALEVIPRTLIQNCGGSTIRKMTELRAIHAQNAENWTFGVDGTSGDLVDMNKLEIWDPLAVRIQVLKTAIETSVMLLRIDDIVSGTKKAVGGEKQEMMPQ.

Belongs to the TCP-1 chaperonin family.

The protein resides in the cytoplasm. In terms of biological role, molecular chaperone; assists the folding of proteins upon ATP hydrolysis. Known to play a role, in vitro, in the folding of actin and tubulin. Plays a role in microtubule polymerization. In Caenorhabditis elegans, this protein is T-complex protein 1 subunit gamma.